A 296-amino-acid polypeptide reads, in one-letter code: Giardin subunit alpha-3 (296 aa).

Annexin repeat units lie at residues aspartate 3–tryptophan 72, glutamate 74–lysine 146, asparagine 153–tyrosine 222, and glycine 226–arginine 295.

It belongs to the annexin family. Giardin subunit alpha subfamily.

The protein resides in the cytoplasm. It is found in the cytoskeleton. In terms of biological role, giardins are involved in parasite attachment to the intestinal mucosa and in the cytoskeletal disassembly and reassembly that marks the transition from infectious trophozoite to transmissible cyst. They may interact with other cytoskeletal proteins such as microtubules in the microribbons or crossbridges, to maintain the integrity of the ventral disk. The sequence is that of Giardin subunit alpha-3 from Giardia intestinalis (Giardia lamblia).